The sequence spans 130 residues: Large ribosomal subunit protein eL32 (130 aa).

Belongs to the eukaryotic ribosomal protein eL32 family.

The chain is Large ribosomal subunit protein eL32 (rpl32e) from Pyrococcus horikoshii (strain ATCC 700860 / DSM 12428 / JCM 9974 / NBRC 100139 / OT-3).